The chain runs to 306 residues: Tryptophan 2,3-dioxygenase (306 aa).

Residues 1 to 33 form a disordered region; the sequence is MQPPGDDAAPRCPFAGAHAPDAPHVPEAAGDDA. Substrate contacts are provided by residues 75–79, Y137, and R141; that span reads FIIQH. H264 contributes to the heme binding site. Substrate is bound at residue T278.

It belongs to the tryptophan 2,3-dioxygenase family. In terms of assembly, homotetramer. Heme is required as a cofactor.

The enzyme catalyses L-tryptophan + O2 = N-formyl-L-kynurenine. It participates in amino-acid degradation; L-tryptophan degradation via kynurenine pathway; L-kynurenine from L-tryptophan: step 1/2. Heme-dependent dioxygenase that catalyzes the oxidative cleavage of the L-tryptophan (L-Trp) pyrrole ring and converts L-tryptophan to N-formyl-L-kynurenine. Catalyzes the oxidative cleavage of the indole moiety. The chain is Tryptophan 2,3-dioxygenase from Burkholderia pseudomallei (strain 1106a).